A 559-amino-acid chain; its full sequence is MDDLDALLADLESTTSHISKRPVFLTEETPYSYPTGNHTYQEIAVPPPVPPPPSSEALNGTVIDPLDQWQPSVSRYGHQQPQSQSPIYSSSAKSSSASVPRDGLSSPSPRASEEEHVYSFPNKQKSAEPSPTMTSTSLGSNLSELDRLLLELNAVQHNPPSGFSADEVSRSPSLPNVTGPHYVIPESSSSAGGKAAPPTKEKPKRNGGRGIEDVRPSVESLLDELESSVPSPVPAITVSQGEVSSPQRVNASQQQTRISASSATRELDELMASLSDFKFMAQGKAGGSSSPPSTTPKPGSQLDTMLGSLQSDLNKLGVATVAKGVCGACKKPIAGQVVTAMGKTWHPEHFVCTHCQEEIGSRNFFERDGQPYCEKDYHNLFSPRCYYCNGPILDKVVTALDRTWHPEHFFCAQCGVFFGPEGFHEKDGKAYCRKDYFDMFAPKCGGCARAILENYISALNTLWHPECFVCRECFTPFINGSFFEHDGQPYCEVHYHERRGSLCSGCQKPITGRCITAMGKKFHPEHFVCAFCLKQLNKGTFKEQNDKPYCQNCFLKLFC.

An LD motif 1 motif is present at residues 3-15; the sequence is DLDALLADLESTT. A disordered region spans residues 17 to 139; the sequence is HISKRPVFLT…SPTMTSTSLG (123 aa). Position 31 is a phosphotyrosine (tyrosine 31). Pro residues predominate over residues 45–54; sequence VPPPVPPPPS. Residues 79–98 show a composition bias toward low complexity; the sequence is QQPQSQSPIYSSSAKSSSAS. Residue tyrosine 118 is modified to Phosphotyrosine; by FAK1. Over residues 121 to 137 the composition is skewed to polar residues; sequence PNKQKSAEPSPTMTSTS. The LD motif 2 motif lies at 144–156; the sequence is ELDRLLLELNAVQ. 2 disordered regions span residues 158 to 213 and 225 to 262; these read NPPS…GIED and LESSVPSPVPAITVSQGEVSSPQRVNASQQQTRISASS. Positions 217 to 229 match the LD motif 3 motif; it reads SVESLLDELESSV. Residues 237–262 are compositionally biased toward polar residues; it reads TVSQGEVSSPQRVNASQQQTRISASS. The tract at residues 263–282 is required for binding to PARVA and ILK; the sequence is ATRELDELMASLSDFKFMAQ. Short sequence motifs (LD motif) lie at residues 266–277 and 301–313; these read ELDELMASLSDF and QLDTMLGSLQSDL. A disordered region spans residues 281-301; the sequence is AQGKAGGSSSPPSTTPKPGSQ. LIM zinc-binding domains lie at 326–376, 385–435, 444–494, and 503–553; these read CGAC…CEKD, CYYC…CRKD, CGGC…CEVH, and CSGC…CQNC.

In terms of assembly, interacts (via LD motif 4) with PARVA/PARVIN and ILK. Phosphorylated on tyrosine residues during integrin-mediated cell adhesion, embryonic development, fibroblast transformation and following stimulation of cells by mitogens.

The protein localises to the cytoplasm. It localises to the cytoskeleton. Its subcellular location is the cell junction. It is found in the focal adhesion. The protein resides in the cell cortex. Its function is as follows. Cytoskeletal protein involved in actin-membrane attachment at sites of cell adhesion to the extracellular matrix (focal adhesion). Binds in vitro to vinculin as well as to the SH3 domain of c-SRC and, when tyrosine phosphorylated, to the SH2 domain of v-CRK. In Gallus gallus (Chicken), this protein is Paxillin (PXN).